Consider the following 179-residue polypeptide: Large ribosomal subunit protein uL6 (179 aa).

This sequence belongs to the universal ribosomal protein uL6 family. As to quaternary structure, part of the 50S ribosomal subunit.

Functionally, this protein binds to the 23S rRNA, and is important in its secondary structure. It is located near the subunit interface in the base of the L7/L12 stalk, and near the tRNA binding site of the peptidyltransferase center. The polypeptide is Large ribosomal subunit protein uL6 (Desulfovibrio desulfuricans (strain ATCC 27774 / DSM 6949 / MB)).